Here is a 475-residue protein sequence, read N- to C-terminus: NADH-quinone oxidoreductase subunit N 1 (475 aa).

Transmembrane regions (helical) follow at residues 8-28 (VMPL…EAAT), 36-56 (LFAI…PSEP), 67-87 (GGFF…ITLI), 100-120 (GEYY…SAAA), 122-142 (LTIL…LAGI), 157-177 (FLLG…IYGA), 199-219 (FLSG…AVPF), 244-264 (AAAL…LETF), 268-288 (PTAI…AALI), 295-315 (MFAY…ATGT), 322-342 (VLYY…IIIL), 366-386 (AFLM…GGFI), 403-423 (LAVA…RVVI), and 443-463 (ATIA…SLLI).

It belongs to the complex I subunit 2 family. As to quaternary structure, NDH-1 is composed of 14 different subunits. Subunits NuoA, H, J, K, L, M, N constitute the membrane sector of the complex.

The protein localises to the cell inner membrane. The enzyme catalyses a quinone + NADH + 5 H(+)(in) = a quinol + NAD(+) + 4 H(+)(out). In terms of biological role, NDH-1 shuttles electrons from NADH, via FMN and iron-sulfur (Fe-S) centers, to quinones in the respiratory chain. The immediate electron acceptor for the enzyme in this species is believed to be a menaquinone. Couples the redox reaction to proton translocation (for every two electrons transferred, four hydrogen ions are translocated across the cytoplasmic membrane), and thus conserves the redox energy in a proton gradient. The sequence is that of NADH-quinone oxidoreductase subunit N 1 from Chloroherpeton thalassium (strain ATCC 35110 / GB-78).